We begin with the raw amino-acid sequence, 346 residues long: Holliday junction branch migration complex subunit RuvB (346 aa).

The segment at 4–185 is large ATPase domain (RuvB-L); that stretch reads SDRIITASPF…FGIVSRLEFY (182 aa). Residues L24, R25, G66, K69, T70, T71, 132-134, R175, Y185, and R222 each bind ATP; that span reads EDY. T70 provides a ligand contact to Mg(2+). Residues 186–256 form a small ATPAse domain (RuvB-S) region; the sequence is TSDELSKIVT…VADAALQMLD (71 aa). The interval 259–346 is head domain (RuvB-H); the sequence is AAGLDVLDRK…AATPGLFNPD (88 aa). The DNA site is built by R295, R314, and R319.

It belongs to the RuvB family. In terms of assembly, homohexamer. Forms an RuvA(8)-RuvB(12)-Holliday junction (HJ) complex. HJ DNA is sandwiched between 2 RuvA tetramers; dsDNA enters through RuvA and exits via RuvB. An RuvB hexamer assembles on each DNA strand where it exits the tetramer. Each RuvB hexamer is contacted by two RuvA subunits (via domain III) on 2 adjacent RuvB subunits; this complex drives branch migration. In the full resolvosome a probable DNA-RuvA(4)-RuvB(12)-RuvC(2) complex forms which resolves the HJ.

The protein resides in the cytoplasm. The catalysed reaction is ATP + H2O = ADP + phosphate + H(+). The RuvA-RuvB-RuvC complex processes Holliday junction (HJ) DNA during genetic recombination and DNA repair, while the RuvA-RuvB complex plays an important role in the rescue of blocked DNA replication forks via replication fork reversal (RFR). RuvA specifically binds to HJ cruciform DNA, conferring on it an open structure. The RuvB hexamer acts as an ATP-dependent pump, pulling dsDNA into and through the RuvAB complex. RuvB forms 2 homohexamers on either side of HJ DNA bound by 1 or 2 RuvA tetramers; 4 subunits per hexamer contact DNA at a time. Coordinated motions by a converter formed by DNA-disengaged RuvB subunits stimulates ATP hydrolysis and nucleotide exchange. Immobilization of the converter enables RuvB to convert the ATP-contained energy into a lever motion, pulling 2 nucleotides of DNA out of the RuvA tetramer per ATP hydrolyzed, thus driving DNA branch migration. The RuvB motors rotate together with the DNA substrate, which together with the progressing nucleotide cycle form the mechanistic basis for DNA recombination by continuous HJ branch migration. Branch migration allows RuvC to scan DNA until it finds its consensus sequence, where it cleaves and resolves cruciform DNA. This is Holliday junction branch migration complex subunit RuvB from Nitrosomonas eutropha (strain DSM 101675 / C91 / Nm57).